The chain runs to 693 residues: Glycine--tRNA ligase beta subunit (693 aa).

The span at 65–74 (QPDKSVEKRG) shows a compositional bias: basic and acidic residues. Residues 65–84 (QPDKSVEKRGPAVKAAFDDS) are disordered.

Belongs to the class-II aminoacyl-tRNA synthetase family. In terms of assembly, tetramer of two alpha and two beta subunits.

It is found in the cytoplasm. The catalysed reaction is tRNA(Gly) + glycine + ATP = glycyl-tRNA(Gly) + AMP + diphosphate. The chain is Glycine--tRNA ligase beta subunit from Marinobacter nauticus (strain ATCC 700491 / DSM 11845 / VT8) (Marinobacter aquaeolei).